The chain runs to 383 residues: Cysteine protease StiP (383 aa).

This sequence belongs to the cysteine protease StiP family. Post-translationally, is probably processed via an autocatalytic removal of a proregion of about 100 amino acids.

Is inhibited by bromopyruvate in vitro. Activity is not affected by the presence of tellurite. Functionally, cysteine protease that may play a role in regulating cell morphology in response to stressful conditions which likely cause oxidative damage. Appears to catalyze its own cleavage, which probably leads to its activation. This is Cysteine protease StiP (stiP) from Acinetobacter baylyi (strain ATCC 33305 / BD413 / ADP1).